Reading from the N-terminus, the 140-residue chain is 3-hydroxyacyl-[acyl-carrier-protein] dehydratase FabZ (140 aa).

The active site involves His47.

Belongs to the thioester dehydratase family. FabZ subfamily.

It is found in the cytoplasm. The catalysed reaction is a (3R)-hydroxyacyl-[ACP] = a (2E)-enoyl-[ACP] + H2O. Its function is as follows. Involved in unsaturated fatty acids biosynthesis. Catalyzes the dehydration of short chain beta-hydroxyacyl-ACPs and long chain saturated and unsaturated beta-hydroxyacyl-ACPs. In Streptococcus mutans serotype c (strain ATCC 700610 / UA159), this protein is 3-hydroxyacyl-[acyl-carrier-protein] dehydratase FabZ.